The sequence spans 260 residues: Snake venom serine protease homolog (260 aa).

Positions 1–18 (MVLVRVLANLLMLQLSYA) are cleaved as a signal peptide. A propeptide spanning residues 19-24 (QKSSEL) is cleaved from the precursor. Residues 25-251 (IIGGDECNIN…HLNWIQSIIA (227 aa)) enclose the Peptidase S1 domain. Intrachain disulfides connect Cys31–Cys165, Cys52–Cys68, Cys100–Cys258, Cys144–Cys212, Cys176–Cys191, and Cys202–Cys227. Residues Asn123 and Asn124 are each glycosylated (N-linked (GlcNAc...) asparagine). Residue Asn253 is glycosylated (N-linked (GlcNAc...) asparagine).

The protein belongs to the peptidase S1 family. Snake venom subfamily. In terms of tissue distribution, expressed by the venom gland.

Its subcellular location is the secreted. Snake venom serine protease homolog that may act in the hemostasis system of the prey. In Protobothrops jerdonii (Jerdon's pitviper), this protein is Snake venom serine protease homolog.